We begin with the raw amino-acid sequence, 416 residues long: Multifunctional CCA protein (416 aa).

The ATP site is built by glycine 8 and arginine 11. Positions 8 and 11 each coordinate CTP. Mg(2+)-binding residues include aspartate 21 and aspartate 23. ATP-binding residues include arginine 91, arginine 138, and arginine 141. Residues arginine 91, arginine 138, and arginine 141 each coordinate CTP. Residues 229-331 form the HD domain; that stretch reads TGLHQELVSD…YELLQRCDAF (103 aa).

This sequence belongs to the tRNA nucleotidyltransferase/poly(A) polymerase family. Bacterial CCA-adding enzyme type 1 subfamily. In terms of assembly, monomer. Can also form homodimers and oligomers. Mg(2+) is required as a cofactor. Requires Ni(2+) as cofactor.

It catalyses the reaction a tRNA precursor + 2 CTP + ATP = a tRNA with a 3' CCA end + 3 diphosphate. It carries out the reaction a tRNA with a 3' CCA end + 2 CTP + ATP = a tRNA with a 3' CCACCA end + 3 diphosphate. In terms of biological role, catalyzes the addition and repair of the essential 3'-terminal CCA sequence in tRNAs without using a nucleic acid template. Adds these three nucleotides in the order of C, C, and A to the tRNA nucleotide-73, using CTP and ATP as substrates and producing inorganic pyrophosphate. tRNA 3'-terminal CCA addition is required both for tRNA processing and repair. Also involved in tRNA surveillance by mediating tandem CCA addition to generate a CCACCA at the 3' terminus of unstable tRNAs. While stable tRNAs receive only 3'-terminal CCA, unstable tRNAs are marked with CCACCA and rapidly degraded. In Xylella fastidiosa (strain 9a5c), this protein is Multifunctional CCA protein.